Here is a 205-residue protein sequence, read N- to C-terminus: Cbp/p300-interacting transactivator 3 (205 aa).

It belongs to the CITED family.

The protein localises to the nucleus. Its function is as follows. Acts as a transcriptional coactivator. Enhances estrogen-dependent transactivation mediated by estrogen receptors. The polypeptide is Cbp/p300-interacting transactivator 3 (CITED3) (Gallus gallus (Chicken)).